We begin with the raw amino-acid sequence, 532 residues long: Neutral amino acid transporter A (532 aa).

M1 is modified (N-acetylmethionine). The span at 1–10 (MEKSNETNGY) shows a compositional bias: polar residues. The interval 1-25 (MEKSNETNGYLDSAQAGPAAGPGAP) is disordered. Over 1–41 (MEKSNETNGYLDSAQAGPAAGPGAPGTAAGRARRCAGFLRR) the chain is Cytoplasmic. Over residues 14-25 (AQAGPAAGPGAP) the composition is skewed to low complexity. Helical transmembrane passes span 42–62 (QALVLLTVSGVLAGAGLGAAL), 88–108 (MIILPLVVCSLVSGAASLDAS), and 119–139 (AYFGLTTLSASALAVALAFII). The Extracellular portion of the chain corresponds to 140–216 (KPGSGAQTLQ…VTHEKIPIGT (77 aa)). Residues N201 and N206 are each glycosylated (N-linked (GlcNAc...) asparagine). 6 consecutive transmembrane segments (helical) span residues 217–237 (EIEGMNILGLVLFALVLGVAL), 257–277 (ATMVLVSWIMWYVPVGIMFLV), 298–318 (IFASILGHVIHGGIVLPLIYF), 328–348 (FLLGLLAPFATAFATCSSSAT), 373–393 (IGATVNMDGAAIFQCVAAVFI), and 418–438 (VGAAGVPAGGVLTIAIILEAI). A disordered region spans residues 500-532 (CKSEEETSPLVTHQNPAGPVASAPELESKESVL). Residues S507, S527, and S530 each carry the phosphoserine modification.

The protein belongs to the dicarboxylate/amino acid:cation symporter (DAACS) (TC 2.A.23) family. SLC1A4 subfamily. As to expression, expressed mostly in brain, muscle, and pancreas but detected in all tissues examined.

The protein resides in the membrane. It localises to the melanosome. It carries out the reaction L-threonine(in) + Na(+)(in) = L-threonine(out) + Na(+)(out). It catalyses the reaction L-serine(in) + Na(+)(in) = L-serine(out) + Na(+)(out). The enzyme catalyses L-cysteine(in) + Na(+)(in) = L-cysteine(out) + Na(+)(out). The catalysed reaction is L-alanine(in) + Na(+)(in) = L-alanine(out) + Na(+)(out). It carries out the reaction L-proline(in) + Na(+)(in) = L-proline(out) + Na(+)(out). It catalyses the reaction 4-hydroxy-L-proline(in) + Na(+)(in) = 4-hydroxy-L-proline(out) + Na(+)(out). Functionally, sodium-dependent neutral amino-acid transporter that mediates transport of alanine, serine, cysteine, proline, hydroxyproline and threonine. The polypeptide is Neutral amino acid transporter A (Homo sapiens (Human)).